The primary structure comprises 690 residues: Translation factor GUF1, mitochondrial (690 aa).

The disordered stretch occupies residues 40-68; sequence SVTVPAARRHNSTKSTNSTTSTNSTTATS. The span at 52-68 shows a compositional bias: low complexity; it reads TKSTNSTTSTNSTTATS. A tr-type G domain is found at 89-272; that stretch reads ERYRNFCIVA…AVIKKMPAPV (184 aa). GTP-binding positions include 98–105, 165–169, and 219–222; these read AHIDHGKS, DTPGH, and NKID.

This sequence belongs to the TRAFAC class translation factor GTPase superfamily. Classic translation factor GTPase family. LepA subfamily.

The protein localises to the mitochondrion inner membrane. The enzyme catalyses GTP + H2O = GDP + phosphate + H(+). Functionally, promotes mitochondrial protein synthesis. May act as a fidelity factor of the translation reaction, by catalyzing a one-codon backward translocation of tRNAs on improperly translocated ribosomes. Binds to mitochondrial ribosomes in a GTP-dependent manner. This chain is Translation factor GUF1, mitochondrial, found in Sordaria macrospora (strain ATCC MYA-333 / DSM 997 / K(L3346) / K-hell).